A 72-amino-acid polypeptide reads, in one-letter code: U-poneritoxin(01)-Om7a (72 aa).

An N-terminal signal peptide occupies residues 1-27 (MKPSGLTFAFLVVFMMAIMYNSVQVTA). A propeptide spanning residues 28-45 (DADADAEAEALANALAEA) is cleaved from the precursor.

Belongs to the formicidae venom precursor-01 superfamily. Expressed by the venom gland.

It localises to the secreted. Its function is as follows. Peptide with unknown function that does not resemble any other pilosulin-like peptide and appears to have a coiled coil structure. The sequence is that of U-poneritoxin(01)-Om7a from Odontomachus monticola (Trap-jaw ant).